A 727-amino-acid chain; its full sequence is Rho-related BTB domain-containing protein 2 (727 aa).

The rho-like stretch occupies residues 1–210 (MDSDMDYERP…DNAIRAALIS (210 aa)). GTP is bound by residues 21–28 (GDNAVGKT), 84–88 (DTFGD), and 140–143 (CQLD). 2 consecutive BTB domains span residues 266 to 442 (ADVI…DENE) and 500 to 567 (SDVT…TSSP). The tract at residues 304–333 (ELGGPSEPGGTHPEDHQGHSDQHHHHHHHH) is disordered. Basic and acidic residues predominate over residues 315–324 (HPEDHQGHSD). A disordered region spans residues 703-727 (FWNSPSSPSSSAASSSSPSSSSAVV). Positions 706 to 727 (SPSSPSSSAASSSSPSSSSAVV) are enriched in low complexity.

Belongs to the small GTPase superfamily. Rho family. Interacts with HSP90AA1 and HSP90AB1. Forms a complex with CUL3 and RBX1. Interacts (via BTB 1 domain) with CUL3. Interacts with MSI2. In terms of processing, autoubiquitinated by RHOBTB2-CUL3-RBX1 ubiquitin ligase complex. As to expression, ubiquitous, with highest levels in neural tissues. Expression is also detected in fetal lung, heart, and brain.

Its function is as follows. Regulator of cell proliferation and apoptosis. It likely functions as a substrate-adapter that recruits key substrates, e.g. MSI2, to CUL3-based ubiquitin ligase complexes for degradation. Required for MSI2 ubiquitination and degradation. The chain is Rho-related BTB domain-containing protein 2 (RHOBTB2) from Homo sapiens (Human).